The sequence spans 318 residues: NADH-ubiquinone oxidoreductase chain 1 (318 aa).

The next 8 helical transmembrane spans lie at 2–22 (FTINILLLIIPILLAVAFLTL), 70–90 (MFIIAPIMALTLALTMWVPLP), 100–120 (LGVLFMLAMSSLAVYSILWSG), 146–166 (LAIILLSVLLMNGSFTLSTLI), 171–191 (HLWLIFPSWPLTMMWFISTLA), 222–242 (LFFMAEYTNIIMMNAFTTILF), 253–273 (ELYTVNFTIKTLLLTISFLWI), and 294–314 (LPLTLALCMWHVSLPITMSSI).

This sequence belongs to the complex I subunit 1 family.

The protein localises to the mitochondrion inner membrane. The catalysed reaction is a ubiquinone + NADH + 5 H(+)(in) = a ubiquinol + NAD(+) + 4 H(+)(out). Core subunit of the mitochondrial membrane respiratory chain NADH dehydrogenase (Complex I) that is believed to belong to the minimal assembly required for catalysis. Complex I functions in the transfer of electrons from NADH to the respiratory chain. The immediate electron acceptor for the enzyme is believed to be ubiquinone. This is NADH-ubiquinone oxidoreductase chain 1 (MT-ND1) from Rhinoceros unicornis (Greater Indian rhinoceros).